Consider the following 586-residue polypeptide: Maltogenic alpha-amylase (586 aa).

Residues Asn-147, Asn-152, Asp-153, Gly-172, and Asp-174 each coordinate Ca(2+). Substrate is bound by residues His-247 and Arg-326. The Nucleophile role is filled by Asp-328. Residue Glu-357 is the Proton donor of the active site. Residues 423-424, Asp-468, and Arg-472 each bind substrate; that span reads HD.

It belongs to the glycosyl hydrolase 13 family. Requires Ca(2+) as cofactor.

It catalyses the reaction hydrolysis of (1-&gt;4)-alpha-D-glucosidic linkages in polysaccharides so as to remove successive alpha-maltose residues from the non-reducing ends of the chains.. Its function is as follows. Converts starch into maltose. This chain is Maltogenic alpha-amylase, found in Bacillus acidopullulyticus.